Consider the following 438-residue polypeptide: Putative phospholipase A2 (438 aa).

Serine 257 acts as the Nucleophile in catalysis. Catalysis depends on charge relay system residues aspartate 291 and histidine 368.

The protein belongs to the serine esterase family.

It localises to the cytoplasm. Its subcellular location is the nucleus. It catalyses the reaction a 1-O-alkyl-2-acetyl-sn-glycero-3-phosphocholine + H2O = a 1-O-alkyl-sn-glycero-3-phosphocholine + acetate + H(+). The protein is Putative phospholipase A2 of Schizosaccharomyces pombe (strain 972 / ATCC 24843) (Fission yeast).